A 178-amino-acid chain; its full sequence is Nicotinamide-nucleotide adenylyltransferase (178 aa).

It belongs to the archaeal NMN adenylyltransferase family. In terms of assembly, homohexamer.

It is found in the cytoplasm. It carries out the reaction beta-nicotinamide D-ribonucleotide + ATP + H(+) = diphosphate + NAD(+). It participates in cofactor biosynthesis; NAD(+) biosynthesis; NAD(+) from nicotinamide D-ribonucleotide: step 1/1. The chain is Nicotinamide-nucleotide adenylyltransferase from Methanothermobacter thermautotrophicus (strain ATCC 29096 / DSM 1053 / JCM 10044 / NBRC 100330 / Delta H) (Methanobacterium thermoautotrophicum).